Consider the following 269-residue polypeptide: Tryptophan synthase alpha chain (269 aa).

Catalysis depends on proton acceptor residues Glu-49 and Asp-60.

It belongs to the TrpA family. In terms of assembly, tetramer of two alpha and two beta chains.

It catalyses the reaction (1S,2R)-1-C-(indol-3-yl)glycerol 3-phosphate + L-serine = D-glyceraldehyde 3-phosphate + L-tryptophan + H2O. It functions in the pathway amino-acid biosynthesis; L-tryptophan biosynthesis; L-tryptophan from chorismate: step 5/5. The alpha subunit is responsible for the aldol cleavage of indoleglycerol phosphate to indole and glyceraldehyde 3-phosphate. The sequence is that of Tryptophan synthase alpha chain from Paramagnetospirillum magneticum (strain ATCC 700264 / AMB-1) (Magnetospirillum magneticum).